Consider the following 122-residue polypeptide: Large ribosomal subunit protein uL22c (122 aa).

This sequence belongs to the universal ribosomal protein uL22 family. Part of the 50S ribosomal subunit.

It is found in the plastid. The protein localises to the chloroplast. This protein binds specifically to 23S rRNA. In terms of biological role, the globular domain of the protein is located near the polypeptide exit tunnel on the outside of the subunit, while an extended beta-hairpin is found that lines the wall of the exit tunnel in the center of the 70S ribosome. The protein is Large ribosomal subunit protein uL22c (rpl22) of Adiantum capillus-veneris (Maidenhair fern).